Consider the following 352-residue polypeptide: C-glycoside deglycosidase alpha subunit (352 aa).

E147 contacts Mn(2+). Catalysis depends on H149, which acts as the Proton acceptor. D179, H269, and E305 together coordinate Mn(2+).

The protein belongs to the C-glycoside deglycosidase alpha subunit family. As to quaternary structure, heterodimer composed of an alpha subunit (CarB2) and a beta subunit (CarC2). The cofactor is a divalent metal cation.

It catalyses the reaction 3''-dehydroorientin = 1,5-anhydro-D-erythro-hex-1-en-3-ulose + luteolin. Its activity is regulated as follows. Activity is strongly reduced in the presence of chelating agents. Its function is as follows. Carbon-carbon bond-cleaving enzyme which participates in the metabolism of C-glycosides. Acts on the C8-glycosylated compound 3''-dehydroorientin (3''-oxo-orientin). In Arthrobacter globiformis (strain ATCC 8010 / DSM 20124 / JCM 1332 / NBRC 12137 / NCIMB 8907 / NRRL B-2979 / 168), this protein is C-glycoside deglycosidase alpha subunit.